The primary structure comprises 512 residues: Spermatocyte protein spe-8 (512 aa).

Residues 1–85 (MRSKSSEGDL…PKPSSDNNNS (85 aa)) are disordered. Residues 15–41 (TQSREDKETTATYSEDTKPETQKERNA) show a composition bias toward basic and acidic residues. Pro residues predominate over residues 68–78 (EAPPPPPPPKP). An SH2 domain is found at 114–205 (FYHGFMGRNE…YEGMTLICGL (92 aa)). In terms of domain architecture, Protein kinase spans 217–485 (VTLNKKLGEG…KEEVGFHEIE (269 aa)). ATP is bound by residues 223-231 (LGEGQFGEV) and K250. D344 serves as the catalytic Proton acceptor.

Belongs to the protein kinase superfamily. Tyr protein kinase family. Fes/fps subfamily. Expression is restricted to male germline.

It localises to the cell membrane. The protein localises to the cytoplasm. It catalyses the reaction L-tyrosyl-[protein] + ATP = O-phospho-L-tyrosyl-[protein] + ADP + H(+). Functionally, probable non-receptor tyrosine-protein kinase which plays a role in spermatid activation (spermiogenesis) in hermaphrodites. This Caenorhabditis elegans protein is Spermatocyte protein spe-8.